The chain runs to 98 residues: Small ribosomal subunit protein bS18 (98 aa).

The protein belongs to the bacterial ribosomal protein bS18 family. As to quaternary structure, part of the 30S ribosomal subunit. Forms a tight heterodimer with protein bS6.

Functionally, binds as a heterodimer with protein bS6 to the central domain of the 16S rRNA, where it helps stabilize the platform of the 30S subunit. The polypeptide is Small ribosomal subunit protein bS18 (Flavobacterium johnsoniae (strain ATCC 17061 / DSM 2064 / JCM 8514 / BCRC 14874 / CCUG 350202 / NBRC 14942 / NCIMB 11054 / UW101) (Cytophaga johnsonae)).